The following is a 388-amino-acid chain: Succinyl-diaminopimelate desuccinylase (388 aa).

His-71 lines the Zn(2+) pocket. Residue Asp-73 is part of the active site. Residue Asp-104 coordinates Zn(2+). The active-site Proton acceptor is the Glu-143. Zn(2+) contacts are provided by Glu-144, Glu-172, and His-361.

It belongs to the peptidase M20A family. DapE subfamily. As to quaternary structure, homodimer. The cofactor is Zn(2+). Co(2+) is required as a cofactor.

The catalysed reaction is N-succinyl-(2S,6S)-2,6-diaminopimelate + H2O = (2S,6S)-2,6-diaminopimelate + succinate. The protein operates within amino-acid biosynthesis; L-lysine biosynthesis via DAP pathway; LL-2,6-diaminopimelate from (S)-tetrahydrodipicolinate (succinylase route): step 3/3. Catalyzes the hydrolysis of N-succinyl-L,L-diaminopimelic acid (SDAP), forming succinate and LL-2,6-diaminopimelate (DAP), an intermediate involved in the bacterial biosynthesis of lysine and meso-diaminopimelic acid, an essential component of bacterial cell walls. The chain is Succinyl-diaminopimelate desuccinylase from Bradyrhizobium diazoefficiens (strain JCM 10833 / BCRC 13528 / IAM 13628 / NBRC 14792 / USDA 110).